The primary structure comprises 206 residues: Peptidyl-tRNA hydrolase (206 aa).

Residue Y14 participates in tRNA binding. H19 serves as the catalytic Proton acceptor. TRNA-binding residues include Y64, N66, and N112.

The protein belongs to the PTH family. In terms of assembly, monomer.

The protein localises to the cytoplasm. The enzyme catalyses an N-acyl-L-alpha-aminoacyl-tRNA + H2O = an N-acyl-L-amino acid + a tRNA + H(+). Hydrolyzes ribosome-free peptidyl-tRNAs (with 1 or more amino acids incorporated), which drop off the ribosome during protein synthesis, or as a result of ribosome stalling. Functionally, catalyzes the release of premature peptidyl moieties from peptidyl-tRNA molecules trapped in stalled 50S ribosomal subunits, and thus maintains levels of free tRNAs and 50S ribosomes. The sequence is that of Peptidyl-tRNA hydrolase from Rhodopseudomonas palustris (strain ATCC BAA-98 / CGA009).